Reading from the N-terminus, the 199-residue chain is Female-specific protein transformer (199 aa).

2 disordered regions span residues 1 to 121 (MDAD…RTPR) and 178 to 199 (YRAG…QAPN). Basic and acidic residues predominate over residues 20–37 (REKMPYFADEVRERDRVR). Basic residues-rich tracts occupy residues 56 to 69 (RRSR…RSRT), 77 to 92 (CQRR…RSGS), and 102 to 119 (SRRR…RSRT).

It localises to the nucleus speckle. Member of the regulatory pathway controlling female somatic sexual differentiation, regulated by Sxl. Activates dsx female-specific splicing by promoting the formation of a splicing enhancer complex which consists of tra, tra2 and sr proteins. The sequence is that of Female-specific protein transformer (tra) from Drosophila virilis (Fruit fly).